A 512-amino-acid polypeptide reads, in one-letter code: 2-isopropylmalate synthase (512 aa).

The Pyruvate carboxyltransferase domain maps to 5–268 (LIIFDTTLRD…DVDIETQHIL (264 aa)). Mn(2+) is bound by residues Asp-14, His-202, His-204, and Asn-239. The regulatory domain stretch occupies residues 394–512 (SFVSLSQHSE…SKADRVAAQG (119 aa)).

This sequence belongs to the alpha-IPM synthase/homocitrate synthase family. LeuA type 1 subfamily. In terms of assembly, homodimer. Mn(2+) serves as cofactor.

The protein localises to the cytoplasm. The enzyme catalyses 3-methyl-2-oxobutanoate + acetyl-CoA + H2O = (2S)-2-isopropylmalate + CoA + H(+). The protein operates within amino-acid biosynthesis; L-leucine biosynthesis; L-leucine from 3-methyl-2-oxobutanoate: step 1/4. Its function is as follows. Catalyzes the condensation of the acetyl group of acetyl-CoA with 3-methyl-2-oxobutanoate (2-ketoisovalerate) to form 3-carboxy-3-hydroxy-4-methylpentanoate (2-isopropylmalate). This Albidiferax ferrireducens (strain ATCC BAA-621 / DSM 15236 / T118) (Rhodoferax ferrireducens) protein is 2-isopropylmalate synthase.